We begin with the raw amino-acid sequence, 91 residues long: Large ribosomal subunit protein eL37B (91 aa).

Zn(2+) is bound by residues Cys-19, Cys-22, Cys-34, and Cys-37. Residues 19-37 form a C4-type zinc finger; the sequence is CRRCGKRSFHIQKSTCACC.

The protein belongs to the eukaryotic ribosomal protein eL37 family. Component of the large ribosomal subunit (LSU). Mature yeast ribosomes consist of a small (40S) and a large (60S) subunit. The 40S small subunit contains 1 molecule of ribosomal RNA (18S rRNA) and at least 33 different proteins. The large 60S subunit contains 3 rRNA molecules (25S, 5.8S and 5S rRNA) and at least 46 different proteins. Zn(2+) serves as cofactor.

The protein localises to the cytoplasm. Its function is as follows. Component of the ribosome, a large ribonucleoprotein complex responsible for the synthesis of proteins in the cell. The small ribosomal subunit (SSU) binds messenger RNAs (mRNAs) and translates the encoded message by selecting cognate aminoacyl-transfer RNA (tRNA) molecules. The large subunit (LSU) contains the ribosomal catalytic site termed the peptidyl transferase center (PTC), which catalyzes the formation of peptide bonds, thereby polymerizing the amino acids delivered by tRNAs into a polypeptide chain. The nascent polypeptides leave the ribosome through a tunnel in the LSU and interact with protein factors that function in enzymatic processing, targeting, and the membrane insertion of nascent chains at the exit of the ribosomal tunnel. The polypeptide is Large ribosomal subunit protein eL37B (rpl3702) (Schizosaccharomyces pombe (strain 972 / ATCC 24843) (Fission yeast)).